The primary structure comprises 549 residues: Alanine aminotransferase 2-like (549 aa).

An N6-(pyridoxal phosphate)lysine modification is found at lysine 367.

Belongs to the class-I pyridoxal-phosphate-dependent aminotransferase family. Alanine aminotransferase subfamily. Homodimer. It depends on pyridoxal 5'-phosphate as a cofactor.

It catalyses the reaction L-alanine + 2-oxoglutarate = pyruvate + L-glutamate. It participates in amino-acid degradation; L-alanine degradation via transaminase pathway; pyruvate from L-alanine: step 1/1. Functionally, catalyzes the reversible transamination between alanine and 2-oxoglutarate to form pyruvate and glutamate. In Danio rerio (Zebrafish), this protein is Alanine aminotransferase 2-like (gpt2l).